A 455-amino-acid polypeptide reads, in one-letter code: Probable glycine dehydrogenase (decarboxylating) subunit 1 (455 aa).

The protein belongs to the GcvP family. N-terminal subunit subfamily. The glycine cleavage system is composed of four proteins: P, T, L and H. In this organism, the P 'protein' is a heterodimer of two subunits.

It carries out the reaction N(6)-[(R)-lipoyl]-L-lysyl-[glycine-cleavage complex H protein] + glycine + H(+) = N(6)-[(R)-S(8)-aminomethyldihydrolipoyl]-L-lysyl-[glycine-cleavage complex H protein] + CO2. Its function is as follows. The glycine cleavage system catalyzes the degradation of glycine. The P protein binds the alpha-amino group of glycine through its pyridoxal phosphate cofactor; CO(2) is released and the remaining methylamine moiety is then transferred to the lipoamide cofactor of the H protein. This chain is Probable glycine dehydrogenase (decarboxylating) subunit 1, found in Francisella tularensis subsp. tularensis (strain FSC 198).